The primary structure comprises 267 residues: Dynein axonemal assembly factor 19 homolog (267 aa).

Disordered regions lie at residues 86 to 111 (ISQSQLPPTTPTEVPTTSGDFTRDWR) and 226 to 250 (HQGKQEQPAAAEAPHEEGGSTVDPC).

The protein belongs to the DNAAF19/PR46b family. In terms of assembly, homodimer.

The protein resides in the cytoplasm. Its subcellular location is the cell projection. The protein localises to the cilium. It localises to the flagellum. Dynein-attachment factor required for cilia motility. This Chlamydomonas reinhardtii (Chlamydomonas smithii) protein is Dynein axonemal assembly factor 19 homolog (PR46b).